A 1243-amino-acid polypeptide reads, in one-letter code: Tau-tubulin kinase 2 (1243 aa).

Residues 21-284 enclose the Protein kinase domain; the sequence is WKVLRKIGGG…LLTSVFDNSI (264 aa). ATP-binding positions include 27-35 and Lys-50; that span reads IGGGGFGEI. Asp-141 functions as the Proton acceptor in the catalytic mechanism. Ser-445 is modified (phosphoserine). Over residues 674–683 the composition is skewed to polar residues; that stretch reads VASTQSTSGS. 2 disordered regions span residues 674–695 and 737–761; these read VASTQSTSGSFHYGPQPEKKDL and TGHDMLPNMRDGDTSQDLGPKDPPD. Position 786 is a phosphoserine (Ser-786). The disordered stretch occupies residues 1063–1086; the sequence is QINGSASPQFLPRPPPGKPPVRPG. Pro residues predominate over residues 1073–1084; sequence LPRPPPGKPPVR. Ser-1102 is modified (phosphoserine). The segment covering 1115–1129 has biased composition (polar residues); the sequence is QNGSQKSRSTTQCKS. The disordered stretch occupies residues 1115-1243; the sequence is QNGSQKSRST…KSKPASKLSR (129 aa). 3 stretches are compositionally biased toward low complexity: residues 1144–1170, 1187–1202, and 1227–1243; these read VVPRRSPSASPRSSSLPRTSSSSPSRA, SKSPPSHSGSSSSRRS, and SSKTPPGKSKPASKLSR.

The protein belongs to the protein kinase superfamily. CK1 Ser/Thr protein kinase family. In terms of assembly, interacts with CEP164. Interacts with MCRS1; the interaction is required for recruitment of TTBK2 to the mother centriole.

It localises to the cell projection. It is found in the cilium. The protein resides in the cytoplasm. Its subcellular location is the cytoskeleton. The protein localises to the cilium basal body. It localises to the microtubule organizing center. It is found in the centrosome. The protein resides in the centriole. Its subcellular location is the cytosol. The protein localises to the nucleus. The catalysed reaction is L-seryl-[protein] + ATP = O-phospho-L-seryl-[protein] + ADP + H(+). The enzyme catalyses L-threonyl-[protein] + ATP = O-phospho-L-threonyl-[protein] + ADP + H(+). In terms of biological role, serine/threonine kinase that acts as a key regulator of ciliogenesis: controls the initiation of ciliogenesis by binding to the distal end of the basal body and promoting the removal of CCP110, which caps the mother centriole, leading to the recruitment of IFT proteins, which build the ciliary axoneme. Has some substrate preference for proteins that are already phosphorylated on a Tyr residue at the +2 position relative to the phosphorylation site. Able to phosphorylate tau on serines in vitro. Phosphorylates MPHOSPH9 which promotes its ubiquitination and proteasomal degradation, loss of MPHOSPH9 facilitates the removal of the CP110-CEP97 complex (a negative regulator of ciliogenesis) from the mother centrioles, promoting the initiation of ciliogenesis. Required for recruitment of CPLANE2 and INTU to the mother centriole. In Mus musculus (Mouse), this protein is Tau-tubulin kinase 2 (Ttbk2).